A 291-amino-acid chain; its full sequence is Small ribosomal subunit protein uS2 (291 aa).

A disordered region spans residues 255-291; that stretch reads AGAATGEWSEAQGAQWETGTGAPAADWAAEPAKESSW.

This sequence belongs to the universal ribosomal protein uS2 family. Component of the small ribosomal subunit. Mature ribosomes consist of a small (40S) and a large (60S) subunit. The 40S subunit contains about 33 different proteins and 1 molecule of RNA (18S). The 60S subunit contains about 49 different proteins and 3 molecules of RNA (25S, 5.8S and 5S). Interacts with RPS21.

The protein resides in the cytoplasm. Its function is as follows. Required for the assembly and/or stability of the 40S ribosomal subunit. Required for the processing of the 20S rRNA-precursor to mature 18S rRNA in a late step of the maturation of 40S ribosomal subunits. The chain is Small ribosomal subunit protein uS2 from Podospora anserina (strain S / ATCC MYA-4624 / DSM 980 / FGSC 10383) (Pleurage anserina).